Reading from the N-terminus, the 323-residue chain is MSKIYEDNSLTIGHTPLVRLNRIGNGRILAKVESRNPSFSVKCRIGANMIWDAEKRGVLKPGVELVEPTSGNTGIALAYVAAARGYKLTLTMPETMSIERRKLLKALGANLVLTEGAKGMKGAIQKAEEIVASDPQKYLLLQQFSNPANPEIHEKTTGPEIWEDTDGQVDVFISGVGTGGTLTGVTRYIKGTKGKTDLITVAVEPTDSPVIAQALAGEEIKPGPHKIQGIGAGFIPGNLDLKLIDKVVGITNEEAISTARRLMEEEGILAGISSGAAVAAALKLQEDESFTNKNIVVILPSSGERYLSTALFADLFTEKELQQ.

Asparagine 8 and arginine 35 together coordinate hydrogen sulfide. Position 42 is an N6-(pyridoxal phosphate)lysine (lysine 42). Residues asparagine 72 and 177–181 contribute to the pyridoxal 5'-phosphate site; that span reads GTGGT. Leucine 269 lines the hydrogen sulfide pocket. Serine 273 contributes to the pyridoxal 5'-phosphate binding site.

This sequence belongs to the cysteine synthase/cystathionine beta-synthase family. As to quaternary structure, homodimer. Pyridoxal 5'-phosphate serves as cofactor.

The enzyme catalyses O-acetyl-L-serine + hydrogen sulfide = L-cysteine + acetate. It functions in the pathway amino-acid biosynthesis; L-cysteine biosynthesis; L-cysteine from L-serine: step 2/2. Two cysteine synthase enzymes are found. Both catalyze the same reaction. Cysteine synthase B can also use thiosulfate in place of sulfide to give cysteine thiosulfonate as a product. The protein is Cysteine synthase A (cysK) of Salmonella typhi.